A 236-amino-acid polypeptide reads, in one-letter code: 2,3,4,5-tetrahydropyridine-2,6-dicarboxylate N-acetyltransferase (236 aa).

The protein belongs to the transferase hexapeptide repeat family. DapH subfamily.

The catalysed reaction is (S)-2,3,4,5-tetrahydrodipicolinate + acetyl-CoA + H2O = L-2-acetamido-6-oxoheptanedioate + CoA. It participates in amino-acid biosynthesis; L-lysine biosynthesis via DAP pathway; LL-2,6-diaminopimelate from (S)-tetrahydrodipicolinate (acetylase route): step 1/3. In terms of biological role, catalyzes the transfer of an acetyl group from acetyl-CoA to tetrahydrodipicolinate. This is 2,3,4,5-tetrahydropyridine-2,6-dicarboxylate N-acetyltransferase from Clostridium perfringens (strain SM101 / Type A).